Here is a 425-residue protein sequence, read N- to C-terminus: Probable aminotransferase tcpI (425 aa).

Lys-256 is modified (N6-(pyridoxal phosphate)lysine).

The protein belongs to the class-I pyridoxal-phosphate-dependent aminotransferase family. Pyridoxal 5'-phosphate serves as cofactor.

The protein operates within secondary metabolite biosynthesis. Functionally, probable aminotransferase; part of the gene cluster that mediates the biosynthesis of an unusual class of epipolythiodioxopiperazines (ETPs) lacking the reactive thiol group important for toxicity. Firstly, L-tyrosine is prenylated by tcpD, before undergoing condensation with L-glycine in a reaction catalyzed by the NRPS tcpP leading to the diketopiperazine (DKP) backbone. Afterwards the alpha-carbon of tyrosine is oxidized by the cytochrome P450 tcpC to form a hydroxyl group. However, in contrast other ETP biosynthesis pathways studied so far, tcpC is not able to bishydroxylate the DKP at both alpha-carbon positions, but hydroxylates the alpha-carbon of the tyrosine part and the nitrogen of the glycine part. The next steps involve an alpha,beta-elimination reaction catalyzed by tcpI, a methylation by the methyltransferase tcpN the action of the four enzyme cascade tcpG/K/J/I. Due to a dysfunctional cytochrome P450 monooxygenase tcpC, the pathway leads to the biosynthesis of probable non-toxic metabolites lacking the reactive thiol group. The sequence is that of Probable aminotransferase tcpI from Claviceps purpurea (strain 20.1) (Ergot fungus).